The chain runs to 566 residues: Cyclin G (566 aa).

The region spanning 285–368 (MWYELPSDVL…VIANKLGVQM (84 aa)) is the Cyclin N-terminal domain.

Belongs to the cyclin family. Cyclin G subfamily. In terms of assembly, interacts with corto. Interacts with the cyclin-dependent kinases Cdk2 and Cdk4. Interacts with Brca2 and Rad9. Interacts with polycomb protein Asx. Interacts with protein phosphatase 2A subunit wdb.

It is found in the chromosome. Cyclin with roles in multiple processes including transcription, meiotic recombination repair, cell cycle regulation, and promotion of normal growth and metabolism. Binds to the promoter region of the homeobox gene Abd-B and is involved in maintaining Abd-B expression in the pupal epithelium. Involved in the transcriptional repression of the homeotic genes Scr and Ubx. Plays a role in meiotic recombination repair of DNA double-strand breaks which ensures efficient translation of grk and promotes grk activity in the oocyte, leading to oocyte dorso-ventral axis formation following secretion of grk from the oocyte and its binding to Egfr in the directly overlying follicle cells. Negatively regulates the binding of serine/threonine-protein kinase Akt1 to the protein phosphatase 2A subunit wdb, promoting normal growth and metabolism. Required for the formation of bilateral symmetry. Negatively regulates cell cycle progression by preventing G1 to S transition and retarding S-phase progression. In Drosophila melanogaster (Fruit fly), this protein is Cyclin G.